Reading from the N-terminus, the 284-residue chain is Ubiquinone biosynthesis protein COQ4, mitochondrial (284 aa).

4 residues coordinate Zn(2+): histidine 165, aspartate 166, histidine 169, and glutamate 181.

Belongs to the COQ4 family. Component of a multi-subunit COQ enzyme complex, composed of at least COQ3, COQ4, COQ5, COQ6, COQ7 and COQ9. Zn(2+) serves as cofactor.

It is found in the mitochondrion inner membrane. It catalyses the reaction a 4-hydroxy-3-methoxy-5-(all-trans-polyprenyl)benzoate + H(+) = a 2-methoxy-6-(all-trans-polyprenyl)phenol + CO2. It functions in the pathway cofactor biosynthesis; ubiquinone biosynthesis. Functionally, lyase that catalyzes the C1-decarboxylation of 4-hydroxy-3-methoxy-5-(all-trans-polyprenyl)benzoic acid into 2-methoxy-6-(all-trans-polyprenyl)phenol during ubiquinone biosynthesis. In Blastomyces gilchristii (strain SLH14081) (Blastomyces dermatitidis), this protein is Ubiquinone biosynthesis protein COQ4, mitochondrial.